A 136-amino-acid chain; its full sequence is Large-conductance mechanosensitive channel (136 aa).

The next 4 helical transmembrane spans lie at 9–29 (AFAS…GAAF), 32–52 (IVSS…LGGV), 54–74 (FSDL…VVIA), and 79–99 (IQTV…LKAI).

This sequence belongs to the MscL family. As to quaternary structure, homopentamer.

The protein resides in the cell inner membrane. Functionally, channel that opens in response to stretch forces in the membrane lipid bilayer. May participate in the regulation of osmotic pressure changes within the cell. This is Large-conductance mechanosensitive channel from Vibrio cholerae serotype O1 (strain ATCC 39541 / Classical Ogawa 395 / O395).